A 275-amino-acid polypeptide reads, in one-letter code: Protein FAM210A (275 aa).

The disordered stretch occupies residues 51 to 100 (KWLHSQPKQQDTATKTPVHDLPSGIQHQSEETSPSARSSISTDPSSIAEE). 2 stretches are compositionally biased toward polar residues: residues 56-65 (QPKQQDTATK) and 75-95 (IQHQSEETSPSARSSISTDPS). One can recognise a DUF1279 domain in the interval 105-217 (DQSIGLLKRF…GYLSTPPLVK (113 aa)). A helical membrane pass occupies residues 124–144 (VLIPVHLVTSSIWFGSFYYAA). The stretch at 221–275 (QDRMEETKELFTEKMEETRDIISGKMEETKDRISEKLQETKDRVAFRKKKNEDME) forms a coiled coil.

Belongs to the FAM210 family.

The protein resides in the membrane. The protein localises to the mitochondrion. It is found in the cytoplasm. Functionally, may play a role in the structure and strength of both muscle and bone. The polypeptide is Protein FAM210A (fam210a) (Xenopus laevis (African clawed frog)).